Here is a 219-residue protein sequence, read N- to C-terminus: Mediator of RNA polymerase II transcription subunit 20 (219 aa).

It belongs to the Mediator complex subunit 20 family. Component of the Mediator complex.

It is found in the nucleus. Its function is as follows. Component of the Mediator complex, a coactivator involved in the regulated transcription of nearly all RNA polymerase II-dependent genes. Mediator functions as a bridge to convey information from gene-specific regulatory proteins to the basal RNA polymerase II transcription machinery. Mediator is recruited to promoters by direct interactions with regulatory proteins and serves as a scaffold for the assembly of a functional preinitiation complex with RNA polymerase II and the general transcription factors. The protein is Mediator of RNA polymerase II transcription subunit 20 (MED20) of Aedes aegypti (Yellowfever mosquito).